The chain runs to 732 residues: Zinc/cadmium/lead-transporting P-type ATPase (732 aa).

The Cytoplasmic portion of the chain corresponds to 1 to 124; that stretch reads MSTPDNHGKK…QAADEPQASR (124 aa). The HMA domain maps to 48–112; sequence TRYSWKVSGM…AVQKAGYSLR (65 aa). Zn(2+) contacts are provided by Asp58, Cys59, and Cys62. A helical membrane pass occupies residues 125–145; it reads LKENLPLITLIVMMAISWGLE. Residue Gln146 is a topological domain, periplasmic. The helical transmembrane segment at 147-167 threads the bilayer; that stretch reads FNHPFGQLAFIATTLVGLYPI. Residues 168–179 lie on the Cytoplasmic side of the membrane; it reads ARQALRLIKSGS. Residues 180 to 197 form a helical membrane-spanning segment; that stretch reads YFAIETLMSVAAIGALFI. The Periplasmic portion of the chain corresponds to 198-202; the sequence is GATAE. The helical transmembrane segment at 203–222 threads the bilayer; the sequence is AAMVLLLFLIGERLEGWAAS. Topologically, residues 223–356 are cytoplasmic; sequence RARQGVSALM…IDRFSRIYTP (134 aa). A helical transmembrane segment spans residues 357–377; sequence AIMAVALLVTLVPPLLFAASW. The Periplasmic segment spans residues 378 to 383; it reads QEWIYK. Residues 384–404 traverse the membrane as a helical segment; sequence GLTLLLIGCPCALVISTPAAI. Zn(2+)-binding residues include Cys392 and Cys394. Over 405–685 the chain is Cytoplasmic; sequence TSGLAAAARR…RATHANIRQN (281 aa). Asp436 functions as the 4-aspartylphosphate intermediate in the catalytic mechanism. Residues Asp436, Thr438, and Asp628 each contribute to the Mg(2+) site. The helical transmembrane segment at 686 to 702 threads the bilayer; it reads ITIALGLKGIFLVTTLL. Residues 703–707 lie on the Periplasmic side of the membrane; that stretch reads GMTGL. Residues 708–729 form a helical membrane-spanning segment; that stretch reads WLAVLADTGATVLVTANALRLL. Asp714 lines the Zn(2+) pocket. At 730–732 the chain is on the cytoplasmic side; sequence RRR.

Belongs to the cation transport ATPase (P-type) (TC 3.A.3) family. Type IB subfamily.

The protein resides in the cell inner membrane. It catalyses the reaction Pb(2+)(in) + ATP + H2O = Pb(2+)(out) + ADP + phosphate + H(+). It carries out the reaction Zn(2+)(in) + ATP + H2O = Zn(2+)(out) + ADP + phosphate + H(+). The enzyme catalyses Cd(2+)(in) + ATP + H2O = Cd(2+)(out) + ADP + phosphate + H(+). Its function is as follows. Confers resistance to zinc, cadmium and lead. Couples the hydrolysis of ATP with the export of zinc, cadmium or lead. The sequence is that of Zinc/cadmium/lead-transporting P-type ATPase from Shigella sonnei (strain Ss046).